Consider the following 163-residue polypeptide: Cuticle protein 38 (163 aa).

14 tandem repeats follow at residues 7 to 10 (AAPV), 13 to 16 (AAPA), 20 to 23 (AAPA), 26 to 29 (AAPV), 56 to 59 (AAPA), 62 to 65 (AAPA), 68 to 71 (AAPA), 75 to 78 (AAPA), 81 to 84 (AAPA), 93 to 96 (AAPV), 123 to 126 (AAPA), 135 to 138 (AAPA), 141 to 144 (AAPA), and 156 to 159 (AAPV).

Component of the cuticle of migratory locust which contains more than 100 different structural proteins. This Locusta migratoria (Migratory locust) protein is Cuticle protein 38.